The primary structure comprises 560 residues: Serine palmitoyltransferase 2 (560 aa).

Residues 65–85 (PMLVAVLTYVGYGVLTLFGYL) traverse the membrane as a helical segment. K377 carries the N6-(pyridoxal phosphate)lysine modification.

It belongs to the class-II pyridoxal-phosphate-dependent aminotransferase family. In terms of assembly, component of the serine palmitoyltransferase (SPT) complex, which is composed of SPTLC1, SPTLC2 or SPTLC3 and SPTSSA or SPTSSB. The heterodimer consisting of SPTLC1 and SPTLC2/SPTLC3 forms the catalytic core of the enzyme, while SPTSSA or SPTSSB subunits determine substrate specificity. SPT also interacts with ORMDL proteins, especially ORMDL3, which negatively regulate SPT activity in the presence of ceramides. Forms dimers of heterodimers with SPTLC1. Pyridoxal 5'-phosphate is required as a cofactor. In terms of tissue distribution, expressed in a variety of tissues. Expressed in brains cortices (at protein level). Expressed in brown and white adipose tissues. Expressed in liver.

It localises to the endoplasmic reticulum membrane. The enzyme catalyses L-serine + hexadecanoyl-CoA + H(+) = 3-oxosphinganine + CO2 + CoA. The catalysed reaction is octadecanoyl-CoA + L-serine + H(+) = 3-oxoeicosasphinganine + CO2 + CoA. The protein operates within lipid metabolism; sphingolipid metabolism. Its activity is regulated as follows. SPT complex catalytic activity is negatively regulated by ORMDL proteins, including ORMDL3, in the presence of ceramides. This mechanism allows to maintain ceramide levels at sufficient concentrations for the production of complex sphingolipids, but which prevents the accumulation of ceramides to levels that trigger apoptosis. Component of the serine palmitoyltransferase multisubunit enzyme (SPT) that catalyzes the initial and rate-limiting step in sphingolipid biosynthesis by condensing L-serine and activated acyl-CoA (most commonly palmitoyl-CoA) to form long-chain bases. The SPT complex is composed of SPTLC1, SPTLC2 or SPTLC3 and SPTSSA or SPTSSB. Within this complex, the heterodimer consisting of SPTLC1 and SPTLC2/SPTLC3 forms the catalytic core. The composition of the serine palmitoyltransferase (SPT) complex determines the substrate preference. The SPTLC1-SPTLC2-SPTSSA complex shows a strong preference for C16-CoA substrate, while the SPTLC1-SPTLC3-SPTSSA isozyme uses both C14-CoA and C16-CoA as substrates, with a slight preference for C14-CoA. The SPTLC1-SPTLC2-SPTSSB complex shows a strong preference for C18-CoA substrate, while the SPTLC1-SPTLC3-SPTSSB isozyme displays an ability to use a broader range of acyl-CoAs, without apparent preference. Crucial for adipogenesis. This chain is Serine palmitoyltransferase 2, found in Mus musculus (Mouse).